A 384-amino-acid polypeptide reads, in one-letter code: Probable L-tyrosine/L-aspartate decarboxylase (384 aa).

At K233 the chain carries N6-(pyridoxal phosphate)lysine.

The protein belongs to the group II decarboxylase family. MfnA subfamily. Pyridoxal 5'-phosphate serves as cofactor.

It catalyses the reaction L-tyrosine + H(+) = tyramine + CO2. It carries out the reaction L-aspartate + H(+) = beta-alanine + CO2. Its pathway is cofactor biosynthesis; methanofuran biosynthesis. It participates in cofactor biosynthesis; coenzyme A biosynthesis. Functionally, catalyzes the decarboxylation of L-tyrosine to produce tyramine for methanofuran biosynthesis. Can also catalyze the decarboxylation of L-aspartate to produce beta-alanine for coenzyme A (CoA) biosynthesis. The protein is Probable L-tyrosine/L-aspartate decarboxylase of Methanococcus maripaludis (strain C5 / ATCC BAA-1333).